Here is a 103-residue protein sequence, read N- to C-terminus: Large ribosomal subunit protein uL24 (103 aa).

It belongs to the universal ribosomal protein uL24 family. In terms of assembly, part of the 50S ribosomal subunit.

In terms of biological role, one of two assembly initiator proteins, it binds directly to the 5'-end of the 23S rRNA, where it nucleates assembly of the 50S subunit. One of the proteins that surrounds the polypeptide exit tunnel on the outside of the subunit. This chain is Large ribosomal subunit protein uL24, found in Mannheimia succiniciproducens (strain KCTC 0769BP / MBEL55E).